The following is a 61-amino-acid chain: Probable tautomerase lin2709 (61 aa).

The active-site Proton acceptor; via imino nitrogen is the Pro2.

Belongs to the 4-oxalocrotonate tautomerase family.

The polypeptide is Probable tautomerase lin2709 (Listeria innocua serovar 6a (strain ATCC BAA-680 / CLIP 11262)).